Here is a 450-residue protein sequence, read N- to C-terminus: Chromosomal replication initiator protein DnaA (450 aa).

Residues 1–69 (MHDVWRQATE…VGALSVTAGK (69 aa)) are domain I, interacts with DnaA modulators. The segment at 69 to 113 (KKYFIELVVQEEDQNAEVPQAEDLIIKGHQEIEQPVTSQPETSSS) is domain II. The interval 114 to 330 (SLNPKYTFEL…GMLIRLGAYS (217 aa)) is domain III, AAA+ region. Gly-158, Gly-160, Lys-161, and Ser-162 together coordinate ATP. The interval 331 to 450 (SLQGIPITLD…IEDIKLILLK (120 aa)) is domain IV, binds dsDNA.

Belongs to the DnaA family. In terms of assembly, oligomerizes as a right-handed, spiral filament on DNA at oriC.

It localises to the cytoplasm. Functionally, plays an essential role in the initiation and regulation of chromosomal replication. ATP-DnaA binds to the origin of replication (oriC) to initiate formation of the DNA replication initiation complex once per cell cycle. Binds the DnaA box (a 9 base pair repeat at the origin) and separates the double-stranded (ds)DNA. Forms a right-handed helical filament on oriC DNA; dsDNA binds to the exterior of the filament while single-stranded (ss)DNA is stabiized in the filament's interior. The ATP-DnaA-oriC complex binds and stabilizes one strand of the AT-rich DNA unwinding element (DUE), permitting loading of DNA polymerase. After initiation quickly degrades to an ADP-DnaA complex that is not apt for DNA replication. Binds acidic phospholipids. The sequence is that of Chromosomal replication initiator protein DnaA from Pelobacter propionicus (strain DSM 2379 / NBRC 103807 / OttBd1).